A 141-amino-acid polypeptide reads, in one-letter code: Lutropin subunit beta (141 aa).

Positions 1–18 (MGTLQGLLLWLLLGTGGA) are cleaved as a signal peptide. Intrachain disulfides connect Cys29/Cys77, Cys43/Cys92, Cys46/Cys130, Cys54/Cys108, Cys58/Cys110, and Cys113/Cys120. N-linked (GlcNAc...) asparagine glycosylation occurs at Asn33.

It belongs to the glycoprotein hormones subunit beta family. As to quaternary structure, heterodimer of a common alpha chain and a unique beta chain which confers biological specificity to thyrotropin, lutropin, follitropin and gonadotropin.

The protein localises to the secreted. Functionally, promotes spermatogenesis and ovulation by stimulating the testes and ovaries to synthesize steroids. The sequence is that of Lutropin subunit beta (LHB) from Oryctolagus cuniculus (Rabbit).